The chain runs to 134 residues: UPF0719 transmembrane protein YshE (134 aa).

Helical transmembrane passes span 10 to 30 (VEIA…LTVF), 48 to 68 (AVAM…QHSI), 78 to 98 (IGWG…FEFL), and 114 to 134 (AVGF…AAGI).

It belongs to the UPF0719 family.

It localises to the cell membrane. The sequence is that of UPF0719 transmembrane protein YshE (yshE) from Bacillus subtilis (strain 168).